The sequence spans 357 residues: tRNA N6-adenosine threonylcarbamoyltransferase (357 aa).

Residues His-113 and His-117 each coordinate Fe cation. Substrate-binding positions include 136–140 (LVSGG), Asp-169, Gly-182, and Asn-288. Position 316 (Asp-316) interacts with Fe cation.

Belongs to the KAE1 / TsaD family. Fe(2+) serves as cofactor.

The protein localises to the cytoplasm. The enzyme catalyses L-threonylcarbamoyladenylate + adenosine(37) in tRNA = N(6)-L-threonylcarbamoyladenosine(37) in tRNA + AMP + H(+). Its function is as follows. Required for the formation of a threonylcarbamoyl group on adenosine at position 37 (t(6)A37) in tRNAs that read codons beginning with adenine. Is involved in the transfer of the threonylcarbamoyl moiety of threonylcarbamoyl-AMP (TC-AMP) to the N6 group of A37, together with TsaE and TsaB. TsaD likely plays a direct catalytic role in this reaction. The polypeptide is tRNA N6-adenosine threonylcarbamoyltransferase (Gemmatimonas aurantiaca (strain DSM 14586 / JCM 11422 / NBRC 100505 / T-27)).